Here is a 147-residue protein sequence, read N- to C-terminus: Large ribosomal subunit protein uL15 (147 aa).

The disordered stretch occupies residues Met1–Arg47. Over residues Thr23 to Gln35 the composition is skewed to gly residues.

This sequence belongs to the universal ribosomal protein uL15 family. Part of the 50S ribosomal subunit.

In terms of biological role, binds to the 23S rRNA. This chain is Large ribosomal subunit protein uL15, found in Clostridioides difficile (strain 630) (Peptoclostridium difficile).